The primary structure comprises 504 residues: Pyruvate kinase (504 aa).

Position 53 (arginine 53) interacts with substrate. Residues asparagine 55, serine 57, aspartate 88, and threonine 89 each contribute to the K(+) site. An ATP-binding site is contributed by asparagine 55–histidine 58. Residues arginine 95 and lysine 181 each coordinate ATP. Residue glutamate 246 coordinates Mg(2+). 3 residues coordinate substrate: glycine 269, aspartate 270, and threonine 302. Position 270 (aspartate 270) interacts with Mg(2+).

This sequence belongs to the pyruvate kinase family. As to quaternary structure, homotetramer. Mg(2+) is required as a cofactor. Requires K(+) as cofactor.

It carries out the reaction pyruvate + ATP = phosphoenolpyruvate + ADP + H(+). The protein operates within carbohydrate degradation; glycolysis; pyruvate from D-glyceraldehyde 3-phosphate: step 5/5. This Debaryomyces hansenii (strain ATCC 36239 / CBS 767 / BCRC 21394 / JCM 1990 / NBRC 0083 / IGC 2968) (Yeast) protein is Pyruvate kinase (PYK1).